Consider the following 315-residue polypeptide: tRNA dimethylallyltransferase (315 aa).

Residue 14–21 (GPTASGKT) coordinates ATP. 16-21 (TASGKT) contributes to the substrate binding site. 3 interaction with substrate tRNA regions span residues 39–42 (DSAL), 163–167 (QRIQR), and 248–253 (RCVGYR).

The protein belongs to the IPP transferase family. In terms of assembly, monomer. Requires Mg(2+) as cofactor.

The catalysed reaction is adenosine(37) in tRNA + dimethylallyl diphosphate = N(6)-dimethylallyladenosine(37) in tRNA + diphosphate. Catalyzes the transfer of a dimethylallyl group onto the adenine at position 37 in tRNAs that read codons beginning with uridine, leading to the formation of N6-(dimethylallyl)adenosine (i(6)A). In Paraburkholderia xenovorans (strain LB400), this protein is tRNA dimethylallyltransferase.